The chain runs to 334 residues: Holliday junction branch migration complex subunit RuvB (334 aa).

A large ATPase domain (RuvB-L) region spans residues 4 to 186 (ADRLIAPENP…FGITQRLEYY (183 aa)). ATP contacts are provided by residues Ile25, Arg26, Gly67, Lys70, Thr71, Thr72, 133 to 135 (EDY), Arg176, Tyr186, and Arg223. Thr71 contributes to the Mg(2+) binding site. The tract at residues 187-257 (KIPDLQNIVQ…TADKALNMLD (71 aa)) is small ATPAse domain (RuvB-S). Residues 260–334 (SKGFDYMDRK…RAYLHFGIEK (75 aa)) are head domain (RuvB-H). 2 residues coordinate DNA: Arg315 and Arg320.

The protein belongs to the RuvB family. In terms of assembly, homohexamer. Forms an RuvA(8)-RuvB(12)-Holliday junction (HJ) complex. HJ DNA is sandwiched between 2 RuvA tetramers; dsDNA enters through RuvA and exits via RuvB. An RuvB hexamer assembles on each DNA strand where it exits the tetramer. Each RuvB hexamer is contacted by two RuvA subunits (via domain III) on 2 adjacent RuvB subunits; this complex drives branch migration. In the full resolvosome a probable DNA-RuvA(4)-RuvB(12)-RuvC(2) complex forms which resolves the HJ.

Its subcellular location is the cytoplasm. It carries out the reaction ATP + H2O = ADP + phosphate + H(+). Functionally, the RuvA-RuvB-RuvC complex processes Holliday junction (HJ) DNA during genetic recombination and DNA repair, while the RuvA-RuvB complex plays an important role in the rescue of blocked DNA replication forks via replication fork reversal (RFR). RuvA specifically binds to HJ cruciform DNA, conferring on it an open structure. The RuvB hexamer acts as an ATP-dependent pump, pulling dsDNA into and through the RuvAB complex. RuvB forms 2 homohexamers on either side of HJ DNA bound by 1 or 2 RuvA tetramers; 4 subunits per hexamer contact DNA at a time. Coordinated motions by a converter formed by DNA-disengaged RuvB subunits stimulates ATP hydrolysis and nucleotide exchange. Immobilization of the converter enables RuvB to convert the ATP-contained energy into a lever motion, pulling 2 nucleotides of DNA out of the RuvA tetramer per ATP hydrolyzed, thus driving DNA branch migration. The RuvB motors rotate together with the DNA substrate, which together with the progressing nucleotide cycle form the mechanistic basis for DNA recombination by continuous HJ branch migration. Branch migration allows RuvC to scan DNA until it finds its consensus sequence, where it cleaves and resolves cruciform DNA. The protein is Holliday junction branch migration complex subunit RuvB of Vibrio vulnificus (strain YJ016).